A 282-amino-acid chain; its full sequence is uncharacterized protein (282 aa).

2 disordered regions span residues 1–45 and 201–259; these read MPLE…EEDE and DRRR…KPWG. The span at 10–19 shows a compositional bias: basic and acidic residues; the sequence is SEMKEFKEST. Residues 26–38 are compositionally biased toward polar residues; the sequence is SVSSEETLTQSMV. The span at 201–237 shows a compositional bias: basic and acidic residues; sequence DRRRKEDSKARSRLTRREEHSEHHRSGKSRRERERRS.

This is an uncharacterized protein from Ostreid herpesvirus 1 (isolate France) (OsHV-1).